The following is a 395-amino-acid chain: 8-amino-3,8-dideoxy-alpha-D-manno-octulosonate transaminase (395 aa).

N6-(pyridoxal phosphate)lysine is present on Lys-186.

Belongs to the DegT/DnrJ/EryC1 family. Pyridoxal 5'-phosphate serves as cofactor.

The enzyme catalyses 8-amino-3,8-dideoxy-alpha-D-manno-octulosonate + 2-oxoglutarate = 3,8-dideoxy-8-oxo-alpha-D-manno-octulosonate + L-glutamate. Its pathway is bacterial outer membrane biogenesis; lipopolysaccharide biosynthesis. Functionally, catalyzes the second (last) step of the biosynthesis of Kdo8N (8-amino-3,8-dideoxy-D-manno-octulosonate) from Kdo (3-deoxy-D-manno-octulosonate). In Shewanella oneidensis (strain ATCC 700550 / JCM 31522 / CIP 106686 / LMG 19005 / NCIMB 14063 / MR-1), this protein is 8-amino-3,8-dideoxy-alpha-D-manno-octulosonate transaminase.